The sequence spans 396 residues: uncharacterized protein (396 aa).

4 residues coordinate [4Fe-4S] cluster: cysteine 8, cysteine 14, cysteine 17, and cysteine 95. 4 residues coordinate S-adenosyl-L-methionine: glutamine 229, tyrosine 258, glutamate 279, and aspartate 325. The active-site Nucleophile is the cysteine 352.

The protein belongs to the class I-like SAM-binding methyltransferase superfamily. RNA M5U methyltransferase family.

This is an uncharacterized protein from Chlamydia trachomatis serovar D (strain ATCC VR-885 / DSM 19411 / UW-3/Cx).